Consider the following 236-residue polypeptide: Demethylmenaquinone methyltransferase (236 aa).

S-adenosyl-L-methionine is bound by residues T62, D80, 107 to 108, and S124; that span reads DA.

The protein belongs to the class I-like SAM-binding methyltransferase superfamily. MenG/UbiE family.

It catalyses the reaction a 2-demethylmenaquinol + S-adenosyl-L-methionine = a menaquinol + S-adenosyl-L-homocysteine + H(+). Its pathway is quinol/quinone metabolism; menaquinone biosynthesis; menaquinol from 1,4-dihydroxy-2-naphthoate: step 2/2. Functionally, methyltransferase required for the conversion of demethylmenaquinol (DMKH2) to menaquinol (MKH2). In Thermobifida fusca (strain YX), this protein is Demethylmenaquinone methyltransferase.